Here is a 63-residue protein sequence, read N- to C-terminus: Large ribosomal subunit protein uL29 (63 aa).

The protein belongs to the universal ribosomal protein uL29 family.

In Shigella flexneri, this protein is Large ribosomal subunit protein uL29.